The chain runs to 502 residues: ATP synthase subunit alpha (502 aa).

169–176 (GDRQTGKT) serves as a coordination point for ATP.

The protein belongs to the ATPase alpha/beta chains family. In terms of assembly, F-type ATPases have 2 components, CF(1) - the catalytic core - and CF(0) - the membrane proton channel. CF(1) has five subunits: alpha(3), beta(3), gamma(1), delta(1), epsilon(1). CF(0) has three main subunits: a(1), b(2) and c(9-12). The alpha and beta chains form an alternating ring which encloses part of the gamma chain. CF(1) is attached to CF(0) by a central stalk formed by the gamma and epsilon chains, while a peripheral stalk is formed by the delta and b chains.

The protein localises to the cell membrane. It carries out the reaction ATP + H2O + 4 H(+)(in) = ADP + phosphate + 5 H(+)(out). Its function is as follows. Produces ATP from ADP in the presence of a proton gradient across the membrane. The alpha chain is a regulatory subunit. The polypeptide is ATP synthase subunit alpha (Clostridium perfringens (strain ATCC 13124 / DSM 756 / JCM 1290 / NCIMB 6125 / NCTC 8237 / Type A)).